The following is a 689-amino-acid chain: DNA ligase (689 aa).

NAD(+) contacts are provided by residues 40-44, 89-90, and Glu121; these read DSEYD and SL. Lys123 acts as the N6-AMP-lysine intermediate in catalysis. 4 residues coordinate NAD(+): Arg144, Glu179, Lys295, and Lys319. The Zn(2+) site is built by Cys413, Cys416, Cys431, and Cys437. One can recognise a BRCT domain in the interval 610–689; that stretch reads REQNILTGKI…VEWLAFIKNA (80 aa).

This sequence belongs to the NAD-dependent DNA ligase family. LigA subfamily. Mg(2+) is required as a cofactor. It depends on Mn(2+) as a cofactor.

The enzyme catalyses NAD(+) + (deoxyribonucleotide)n-3'-hydroxyl + 5'-phospho-(deoxyribonucleotide)m = (deoxyribonucleotide)n+m + AMP + beta-nicotinamide D-nucleotide.. Its function is as follows. DNA ligase that catalyzes the formation of phosphodiester linkages between 5'-phosphoryl and 3'-hydroxyl groups in double-stranded DNA using NAD as a coenzyme and as the energy source for the reaction. It is essential for DNA replication and repair of damaged DNA. In Rickettsia prowazekii (strain Madrid E), this protein is DNA ligase.